A 285-amino-acid chain; its full sequence is 33 kDa chaperonin (285 aa).

2 disulfides stabilise this stretch: Cys228-Cys230 and Cys261-Cys264.

Belongs to the HSP33 family. Under oxidizing conditions two disulfide bonds are formed involving the reactive cysteines. Under reducing conditions zinc is bound to the reactive cysteines and the protein is inactive.

Its subcellular location is the cytoplasm. Its function is as follows. Redox regulated molecular chaperone. Protects both thermally unfolding and oxidatively damaged proteins from irreversible aggregation. Plays an important role in the bacterial defense system toward oxidative stress. This chain is 33 kDa chaperonin, found in Hahella chejuensis (strain KCTC 2396).